A 417-amino-acid chain; its full sequence is MNILVLNCGSSSVKFRLIHTYFDLIRENKDYSIASGLIERVGSEGLLSFRSTNAQGEVLSTLRTTAPVRTHQAAIDQIIKWITSENSGIQGIQSLEDIHAVGHRVVHGGEKLTRSVLIDDSVVEQIEDCIELAPLHNPQNLKGIYAAKKTFGPNIPQVAVFDTAFHHTLPDHAYLYALPYQIYRRHRIRRYGFHGLSHRYVRFRYRTILGMERENVNIISLHLGNGCSACAIKNGNSIDTSMGMTPLEGLVMGTRAGDVDPAILTYLAHKEGHSLDDLDKLLNSQSGLLGISGLTNDMRELIEESLENDDRRAKLALEIFAYRIKKYVGAYLSAMNGADAIIFTGGIGENADFIRQKICAGMNWCGIEIDENLNKQTTRGREGRISPDGNKPEVWVIPTNEELVIARDTYRCVMRKE.

Mg(2+) is bound at residue N7. ATP is bound at residue K14. R104 provides a ligand contact to substrate. The active-site Proton donor/acceptor is the D162. Residues 222-226, 297-299, and 346-350 each bind ATP; these read HLGNG, DMR, and GIGEN. Position 401 (E401) interacts with Mg(2+).

It belongs to the acetokinase family. Homodimer. Mg(2+) serves as cofactor. The cofactor is Mn(2+).

It is found in the cytoplasm. It carries out the reaction acetate + ATP = acetyl phosphate + ADP. It participates in metabolic intermediate biosynthesis; acetyl-CoA biosynthesis; acetyl-CoA from acetate: step 1/2. Its function is as follows. Catalyzes the formation of acetyl phosphate from acetate and ATP. Can also catalyze the reverse reaction. In Chloroherpeton thalassium (strain ATCC 35110 / GB-78), this protein is Acetate kinase.